The chain runs to 156 residues: Ribosomal RNA large subunit methyltransferase H (156 aa).

S-adenosyl-L-methionine is bound by residues Leu-73, Gly-104, and 123–128 (LSPLTL).

Belongs to the RNA methyltransferase RlmH family. In terms of assembly, homodimer.

The protein resides in the cytoplasm. It carries out the reaction pseudouridine(1915) in 23S rRNA + S-adenosyl-L-methionine = N(3)-methylpseudouridine(1915) in 23S rRNA + S-adenosyl-L-homocysteine + H(+). Functionally, specifically methylates the pseudouridine at position 1915 (m3Psi1915) in 23S rRNA. This is Ribosomal RNA large subunit methyltransferase H from Photorhabdus laumondii subsp. laumondii (strain DSM 15139 / CIP 105565 / TT01) (Photorhabdus luminescens subsp. laumondii).